A 70-amino-acid chain; its full sequence is UPF0337 protein BC_3635 (70 aa).

The protein belongs to the UPF0337 (CsbD) family.

This chain is UPF0337 protein BC_3635, found in Bacillus cereus (strain ATCC 14579 / DSM 31 / CCUG 7414 / JCM 2152 / NBRC 15305 / NCIMB 9373 / NCTC 2599 / NRRL B-3711).